The sequence spans 332 residues: MQAIFNKLFNAQTLTQQESQQLFAAIIQGELSEPQLAAVLISMKLRGEQPQEIAGAAQALLANALPFPRPDYTFCDIVGTGGDGANSINISTASAFVASACQIKIAKHGNRSVSSQSGSSDLLAAFGIALDISAECARSALDEIGICFLFAPHYHLGFCHAMPVRQQLKTRTIFNILGPLINPARPPLALIGVYSPELVEPIARTLLVLGYQRAAVVHSGGMDEVALHAPTKVAEINDGEIIHYQLNAEDFGLQRHPMSALKGGSPVDNHEMLSLLLQGRGKKAHADAVAANVALLMKIHGQEDLRHNTQQALETIHSGRAYERVIALATRS.

5-phospho-alpha-D-ribose 1-diphosphate is bound by residues G79, 82 to 83 (GD), S87, 89 to 92 (NIST), 107 to 115 (KHGNRSVSS), and S119. G79 contacts anthranilate. A Mg(2+)-binding site is contributed by S91. N110 serves as a coordination point for anthranilate. R165 is a binding site for anthranilate. D223 and E224 together coordinate Mg(2+).

The protein belongs to the anthranilate phosphoribosyltransferase family. Homodimer. It depends on Mg(2+) as a cofactor.

The enzyme catalyses N-(5-phospho-beta-D-ribosyl)anthranilate + diphosphate = 5-phospho-alpha-D-ribose 1-diphosphate + anthranilate. The protein operates within amino-acid biosynthesis; L-tryptophan biosynthesis; L-tryptophan from chorismate: step 2/5. Catalyzes the transfer of the phosphoribosyl group of 5-phosphorylribose-1-pyrophosphate (PRPP) to anthranilate to yield N-(5'-phosphoribosyl)-anthranilate (PRA). The protein is Anthranilate phosphoribosyltransferase of Photorhabdus laumondii subsp. laumondii (strain DSM 15139 / CIP 105565 / TT01) (Photorhabdus luminescens subsp. laumondii).